We begin with the raw amino-acid sequence, 105 residues long: Guanidinium exporter (105 aa).

A helical membrane pass occupies residues methionine 1–lysine 21. The Cytoplasmic portion of the chain corresponds to tyrosine 22 to arginine 28. Residues leucine 29 to alanine 49 form a helical membrane-spanning segment. Residues methionine 50 to threonine 57 are Periplasmic-facing. The helical transmembrane segment at alanine 58–leucine 78 threads the bilayer. At glycine 79–serine 81 the chain is on the cytoplasmic side. A helical membrane pass occupies residues alanine 82–leucine 102. The Periplasmic portion of the chain corresponds to serine 103–histidine 105.

The protein belongs to the drug/metabolite transporter (DMT) superfamily. Small multidrug resistance (SMR) (TC 2.A.7.1) family. Gdx/SugE subfamily.

It is found in the cell inner membrane. Functionally, guanidinium ion exporter. Couples guanidinium export to the proton motive force, exchanging one guanidinium ion for two protons. This Escherichia coli O6:H1 (strain CFT073 / ATCC 700928 / UPEC) protein is Guanidinium exporter.